A 416-amino-acid chain; its full sequence is Imidazolonepropionase (416 aa).

Residues H78 and H80 each contribute to the Fe(3+) site. 2 residues coordinate Zn(2+): H78 and H80. R87, Y150, and H183 together coordinate 4-imidazolone-5-propanoate. Y150 contributes to the N-formimidoyl-L-glutamate binding site. H248 is a binding site for Fe(3+). H248 contacts Zn(2+). Q251 is a 4-imidazolone-5-propanoate binding site. D323 provides a ligand contact to Fe(3+). D323 contributes to the Zn(2+) binding site. The N-formimidoyl-L-glutamate site is built by N325 and G327. A 4-imidazolone-5-propanoate-binding site is contributed by T328.

It belongs to the metallo-dependent hydrolases superfamily. HutI family. Requires Zn(2+) as cofactor. Fe(3+) serves as cofactor.

It localises to the cytoplasm. It carries out the reaction 4-imidazolone-5-propanoate + H2O = N-formimidoyl-L-glutamate. It functions in the pathway amino-acid degradation; L-histidine degradation into L-glutamate; N-formimidoyl-L-glutamate from L-histidine: step 3/3. Functionally, catalyzes the hydrolytic cleavage of the carbon-nitrogen bond in imidazolone-5-propanoate to yield N-formimidoyl-L-glutamate. It is the third step in the universal histidine degradation pathway. The sequence is that of Imidazolonepropionase from Vibrio parahaemolyticus serotype O3:K6 (strain RIMD 2210633).